Here is a 389-residue protein sequence, read N- to C-terminus: Succinate--CoA ligase [ADP-forming] subunit beta (389 aa).

Residues lysine 9–glutamate 244 form the ATP-grasp domain. Residues lysine 46, glycine 53–glycine 55, glutamate 99, alanine 102, and glutamate 107 contribute to the ATP site. Residues asparagine 199 and aspartate 213 each coordinate Mg(2+). Substrate-binding positions include asparagine 264 and glycine 321–methionine 323.

Belongs to the succinate/malate CoA ligase beta subunit family. In terms of assembly, heterotetramer of two alpha and two beta subunits. Requires Mg(2+) as cofactor.

The catalysed reaction is succinate + ATP + CoA = succinyl-CoA + ADP + phosphate. It catalyses the reaction GTP + succinate + CoA = succinyl-CoA + GDP + phosphate. Its pathway is carbohydrate metabolism; tricarboxylic acid cycle; succinate from succinyl-CoA (ligase route): step 1/1. Functionally, succinyl-CoA synthetase functions in the citric acid cycle (TCA), coupling the hydrolysis of succinyl-CoA to the synthesis of either ATP or GTP and thus represents the only step of substrate-level phosphorylation in the TCA. The beta subunit provides nucleotide specificity of the enzyme and binds the substrate succinate, while the binding sites for coenzyme A and phosphate are found in the alpha subunit. This is Succinate--CoA ligase [ADP-forming] subunit beta from Cupriavidus pinatubonensis (strain JMP 134 / LMG 1197) (Cupriavidus necator (strain JMP 134)).